The primary structure comprises 433 residues: Acetyl-CoA-benzylalcohol acetyltransferase (433 aa).

Active-site proton acceptor residues include His152 and Asp377.

Belongs to the plant acyltransferase family.

The enzyme catalyses benzyl alcohol + acetyl-CoA = benzyl acetate + CoA. It carries out the reaction (E)-cinnamyl alcohol + acetyl-CoA = (E)-cinnamyl acetate + CoA. Its function is as follows. Involved in the biosynthesis of benzyl acetate, a major constituent of the floral scent. Can use benzylalcohol, cinnamylalcohol, 3-cis-hexene-1-ol or heptanol as substrates. Has some activity with 2-phenylethanol and 2-naphtalene-ethanol. The chain is Acetyl-CoA-benzylalcohol acetyltransferase (BEAT) from Clarkia breweri (Fairy fans).